A 378-amino-acid polypeptide reads, in one-letter code: Squalene methyltransferase 2 (378 aa).

Residues 17-37 (LLTVKGATGLIAALILGYIII) traverse the membrane as a helical segment.

This sequence belongs to the class I-like SAM-binding methyltransferase superfamily. Erg6/SMT family.

Its subcellular location is the microsome membrane. The catalysed reaction is squalene + 2 S-adenosyl-L-methionine = 3,22-dimethyl-1,2,23,24-tetradehydro-2,3,22,23-tetrahydrosqualene + 2 S-adenosyl-L-homocysteine + 2 H(+). Functionally, converts squalene to mono- and dimethyl derivatives, but not to tri- and tetramethylated products. Unable to methylate cycloartenol, zymosterol or lanosterol. Methylates both C-3 and C22 positions, but only C-3 position in monomethylated products. Produces mainly monomethylated squalene and only 20% of dimethylated squalene. This chain is Squalene methyltransferase 2 (TMT-2), found in Botryococcus braunii (Green alga).